The chain runs to 305 residues: uncharacterized protein (305 aa).

The next 10 membrane-spanning stretches (helical) occupy residues 11–31, 37–57, 70–90, 97–117, 126–146, 148–168, 180–200, 217–237, 244–264, and 265–285; these read LLLAFLVIMWGVNWPLSKAAL, LLFAGIRTLIGGLLLVIVALP, IYLVSALLNITLFYGLQTIGL, LFSAIVFFQPVLMGVFSWLWL, VIGLILGFAGVAVISAAGFGG, ISVIGVLLALGSAVSWALGTV, IWMVALQLTIGSVFLLISGFW, LLFISVFVIALGWLVFFTLVG, VASYTFLIPLISIVASSIFLH, and EPLTLSLLAGLLLIVTSICLV. EamA domains are found at residues 18 to 141 and 161 to 287; these read IMWG…VISA and VSWA…LVNT.

Belongs to the EamA transporter family.

It is found in the cell membrane. This is an uncharacterized protein from Bacillus subtilis (strain 168).